The following is a 242-amino-acid chain: Triosephosphate isomerase (242 aa).

9-11 serves as a coordination point for substrate; the sequence is NWK. The active-site Electrophile is histidine 96. The active-site Proton acceptor is the glutamate 165. Residues glycine 171, serine 204, and 225–226 each bind substrate; that span reads GG.

The protein belongs to the triosephosphate isomerase family. In terms of assembly, homodimer.

The protein resides in the cytoplasm. It catalyses the reaction D-glyceraldehyde 3-phosphate = dihydroxyacetone phosphate. Its pathway is carbohydrate biosynthesis; gluconeogenesis. It participates in carbohydrate degradation; glycolysis; D-glyceraldehyde 3-phosphate from glycerone phosphate: step 1/1. In terms of biological role, involved in the gluconeogenesis. Catalyzes stereospecifically the conversion of dihydroxyacetone phosphate (DHAP) to D-glyceraldehyde-3-phosphate (G3P). This Synechocystis sp. (strain ATCC 27184 / PCC 6803 / Kazusa) protein is Triosephosphate isomerase.